A 160-amino-acid chain; its full sequence is Small ribosomal subunit protein uS7 (160 aa).

This sequence belongs to the universal ribosomal protein uS7 family. In terms of assembly, part of the 30S ribosomal subunit. Contacts proteins S9 and S11.

One of the primary rRNA binding proteins, it binds directly to 16S rRNA where it nucleates assembly of the head domain of the 30S subunit. Is located at the subunit interface close to the decoding center, probably blocks exit of the E-site tRNA. The chain is Small ribosomal subunit protein uS7 from Rickettsia conorii (strain ATCC VR-613 / Malish 7).